Reading from the N-terminus, the 433-residue chain is Trigger factor (433 aa).

One can recognise a PPIase FKBP-type domain in the interval 163–248; sequence GNFVVIDFVG…VKEAKVKELP (86 aa).

It belongs to the FKBP-type PPIase family. Tig subfamily.

The protein resides in the cytoplasm. It carries out the reaction [protein]-peptidylproline (omega=180) = [protein]-peptidylproline (omega=0). In terms of biological role, involved in protein export. Acts as a chaperone by maintaining the newly synthesized protein in an open conformation. Functions as a peptidyl-prolyl cis-trans isomerase. The sequence is that of Trigger factor from Geobacter metallireducens (strain ATCC 53774 / DSM 7210 / GS-15).